Here is a 237-residue protein sequence, read N- to C-terminus: Segregation and condensation protein A (237 aa).

It belongs to the ScpA family. Component of a cohesin-like complex composed of ScpA, ScpB and the Smc homodimer, in which ScpA and ScpB bind to the head domain of Smc. The presence of the three proteins is required for the association of the complex with DNA.

Its subcellular location is the cytoplasm. In terms of biological role, participates in chromosomal partition during cell division. May act via the formation of a condensin-like complex containing Smc and ScpB that pull DNA away from mid-cell into both cell halves. In Streptococcus thermophilus (strain ATCC BAA-250 / LMG 18311), this protein is Segregation and condensation protein A.